The following is a 101-amino-acid chain: Large ribosomal subunit protein eL30 (101 aa).

Belongs to the eukaryotic ribosomal protein eL30 family.

This chain is Large ribosomal subunit protein eL30, found in Pyrobaculum islandicum (strain DSM 4184 / JCM 9189 / GEO3).